The primary structure comprises 381 residues: 1-deoxy-D-xylulose 5-phosphate reductoisomerase (381 aa).

T10, G11, S12, I13, and N120 together coordinate NADPH. Position 121 (K121) interacts with 1-deoxy-D-xylulose 5-phosphate. NADPH is bound at residue E122. D146 contacts Mn(2+). 1-deoxy-D-xylulose 5-phosphate-binding residues include S147, E148, S172, and H195. E148 lines the Mn(2+) pocket. An NADPH-binding site is contributed by G201. Residues S208, N213, K214, and E217 each coordinate 1-deoxy-D-xylulose 5-phosphate. E217 is a binding site for Mn(2+).

This sequence belongs to the DXR family. The cofactor is Mg(2+). It depends on Mn(2+) as a cofactor.

The enzyme catalyses 2-C-methyl-D-erythritol 4-phosphate + NADP(+) = 1-deoxy-D-xylulose 5-phosphate + NADPH + H(+). Its pathway is isoprenoid biosynthesis; isopentenyl diphosphate biosynthesis via DXP pathway; isopentenyl diphosphate from 1-deoxy-D-xylulose 5-phosphate: step 1/6. Catalyzes the NADPH-dependent rearrangement and reduction of 1-deoxy-D-xylulose-5-phosphate (DXP) to 2-C-methyl-D-erythritol 4-phosphate (MEP). This is 1-deoxy-D-xylulose 5-phosphate reductoisomerase from Thermodesulfovibrio yellowstonii (strain ATCC 51303 / DSM 11347 / YP87).